We begin with the raw amino-acid sequence, 265 residues long: Uridylate kinase (265 aa).

Residues 1–29 (MTESREPHVAGSAAPRPEPANGLASGQPS) are disordered. ATP is bound at residue 40 to 43 (KLGG). A UMP-binding site is contributed by Gly-81. 2 residues coordinate ATP: Gly-82 and Arg-86. UMP-binding positions include Asp-101 and 162–169 (MGLPYFST). The ATP site is built by Phe-195 and Asp-198.

The protein belongs to the UMP kinase family. Homohexamer.

The protein localises to the cytoplasm. The catalysed reaction is UMP + ATP = UDP + ADP. The protein operates within pyrimidine metabolism; CTP biosynthesis via de novo pathway; UDP from UMP (UMPK route): step 1/1. With respect to regulation, inhibited by UTP. Functionally, catalyzes the reversible phosphorylation of UMP to UDP. The polypeptide is Uridylate kinase (Mycolicibacterium paratuberculosis (strain ATCC BAA-968 / K-10) (Mycobacterium paratuberculosis)).